Reading from the N-terminus, the 438-residue chain is Putative galacturan 1,4-alpha-galacturonidase A (438 aa).

The first 21 residues, 1–21 (MRMPSAISIGVFAGLSLAASA), serve as a signal peptide directing secretion. Residues asparagine 28, asparagine 102, asparagine 111, and asparagine 197 are each glycosylated (N-linked (GlcNAc...) asparagine). PbH1 repeat units lie at residues 186-222 (SSHI…DTYR) and 223-244 (SDHI…AFKG). The active-site Proton donor is aspartate 237. N-linked (GlcNAc...) asparagine glycans are attached at residues asparagine 245, asparagine 253, asparagine 279, asparagine 325, asparagine 353, asparagine 372, and asparagine 388. PbH1 repeat units lie at residues 246–266 (STNI…AFGS), 277–303 (VENV…YFKS), and 323–344 (VRNV…YIDT). Cysteine 397 and cysteine 403 are joined by a disulfide. N-linked (GlcNAc...) asparagine glycosylation is present at asparagine 418.

The protein belongs to the glycosyl hydrolase 28 family.

It localises to the secreted. It carries out the reaction [(1-&gt;4)-alpha-D-galacturonosyl](n) + H2O = alpha-D-galacturonate + [(1-&gt;4)-alpha-D-galacturonosyl](n-1). In terms of biological role, specific in hydrolyzing the terminal glycosidic bond of polygalacturonic acid and oligogalacturonates. This Aspergillus niger protein is Putative galacturan 1,4-alpha-galacturonidase A (rgxA).